We begin with the raw amino-acid sequence, 318 residues long: Dehydrogenase/reductase SDR family member 7C-B (318 aa).

Positions 1–32 (MGMSDIMWLDVSWAWLVLTAVLLAAAVFYLYT) are cleaved as a signal peptide. 49 to 73 (LITDSLSTVGNECAKLFHAGGARLI) contacts NAD(+). Serine 186 provides a ligand contact to substrate. The Proton acceptor role is filled by tyrosine 199.

Belongs to the short-chain dehydrogenases/reductases (SDR) family.

The protein localises to the secreted. Functionally, putative oxidoreductase. This is Dehydrogenase/reductase SDR family member 7C-B (dhrs7cb) from Danio rerio (Zebrafish).